Here is a 596-residue protein sequence, read N- to C-terminus: MKHIRNFSIIAHIDHGKSTLSDRLIQVCGGLTDREMDSQVLDSMDLERERGITIKAQSVTLDYKAKDGQVYQLNFIDTPGHVDFSYEVSRSLAACEGALLVVDAGQGVEAQTLANCYTALDMNLDVVPILNKIDLPQADPERVAAEIEDIVGIDAMDAVRCSAKTGVGVDEVLEVIVAKIPPPEGDPDAPLQALIIDSWFDNYLGVVSLVRIKHGSLKKGDKFKVMSTGQNHTADRVGIFTPKQTDKTELKTGEVGFVIAGLKEIHGAPVGDTLTLAKNGADKPLPGFKKVKPQVYAGVFPISTDEYENFRDALNKLSLNDASLFFEPESSSALGFGFRIGYLGLLHMEIVQERLEREYNLELITTAPTVVYEVVMTNGETIYVDNPSDLPAINNIEEMREPIVEANILVPKEYLGNVITLCIEKRGTQVNMVYHGNQVAVTYHLPMAEVVMDFFDRLKSTSRGYASLEYNFIRFDPADMVRLDILINGDRVDALAMVIHRSNIRHRGLALVEKMKELIPRQMFDIAIQAAVGSQIIARSTVKALRKDVTAKCYGGDVSRKKKLLNKQKEGKKRMKQVGNVEVPQEAFLAVLKLNE.

The tr-type G domain occupies 2 to 184 (KHIRNFSIIA…VIVAKIPPPE (183 aa)). GTP is bound by residues 14 to 19 (DHGKST) and 131 to 134 (NKID).

It belongs to the TRAFAC class translation factor GTPase superfamily. Classic translation factor GTPase family. LepA subfamily.

The protein resides in the cell inner membrane. It catalyses the reaction GTP + H2O = GDP + phosphate + H(+). Functionally, required for accurate and efficient protein synthesis under certain stress conditions. May act as a fidelity factor of the translation reaction, by catalyzing a one-codon backward translocation of tRNAs on improperly translocated ribosomes. Back-translocation proceeds from a post-translocation (POST) complex to a pre-translocation (PRE) complex, thus giving elongation factor G a second chance to translocate the tRNAs correctly. Binds to ribosomes in a GTP-dependent manner. The polypeptide is Elongation factor 4 (Shewanella sp. (strain W3-18-1)).